The primary structure comprises 365 residues: 3-dehydroquinate synthase (365 aa).

NAD(+) is bound by residues 106–110 (GVIGD), 130–131 (TT), Lys-142, Lys-151, and 169–172 (FFAT). Residues Glu-184, His-247, and His-264 each coordinate Zn(2+).

The protein belongs to the sugar phosphate cyclases superfamily. Dehydroquinate synthase family. Co(2+) is required as a cofactor. It depends on Zn(2+) as a cofactor. NAD(+) serves as cofactor.

It localises to the cytoplasm. It carries out the reaction 7-phospho-2-dehydro-3-deoxy-D-arabino-heptonate = 3-dehydroquinate + phosphate. The protein operates within metabolic intermediate biosynthesis; chorismate biosynthesis; chorismate from D-erythrose 4-phosphate and phosphoenolpyruvate: step 2/7. Catalyzes the conversion of 3-deoxy-D-arabino-heptulosonate 7-phosphate (DAHP) to dehydroquinate (DHQ). The sequence is that of 3-dehydroquinate synthase from Listeria welshimeri serovar 6b (strain ATCC 35897 / DSM 20650 / CCUG 15529 / CIP 8149 / NCTC 11857 / SLCC 5334 / V8).